A 338-amino-acid chain; its full sequence is Glyceraldehyde-3-phosphate dehydrogenase 2 (338 aa).

NAD(+) is bound by residues 12-13 (RI), Asp-34, and Arg-79. Residues 150 to 152 (SCT), Thr-181, 210 to 211 (TG), and Arg-233 contribute to the D-glyceraldehyde 3-phosphate site. The Nucleophile role is filled by Cys-151. Asn-315 contacts NAD(+).

Belongs to the glyceraldehyde-3-phosphate dehydrogenase family. In terms of assembly, homotetramer.

The protein resides in the cytoplasm. The enzyme catalyses D-glyceraldehyde 3-phosphate + phosphate + NAD(+) = (2R)-3-phospho-glyceroyl phosphate + NADH + H(+). Its pathway is carbohydrate degradation; glycolysis; pyruvate from D-glyceraldehyde 3-phosphate: step 1/5. The protein is Glyceraldehyde-3-phosphate dehydrogenase 2 (GPD2) of Mucor circinelloides f. lusitanicus (Mucor racemosus var. lusitanicus).